The following is an 88-amino-acid chain: Small ribosomal subunit protein bS16c (88 aa).

It belongs to the bacterial ribosomal protein bS16 family.

It localises to the plastid. The protein resides in the chloroplast. The chain is Small ribosomal subunit protein bS16c from Calycanthus floridus var. glaucus (Eastern sweetshrub).